The following is a 115-amino-acid chain: NAD(P)H-quinone oxidoreductase subunit M (115 aa).

It belongs to the complex I NdhM subunit family. NDH-1 can be composed of about 15 different subunits; different subcomplexes with different compositions have been identified which probably have different functions.

It localises to the cellular thylakoid membrane. It carries out the reaction a plastoquinone + NADH + (n+1) H(+)(in) = a plastoquinol + NAD(+) + n H(+)(out). The enzyme catalyses a plastoquinone + NADPH + (n+1) H(+)(in) = a plastoquinol + NADP(+) + n H(+)(out). NDH-1 shuttles electrons from an unknown electron donor, via FMN and iron-sulfur (Fe-S) centers, to quinones in the respiratory and/or the photosynthetic chain. The immediate electron acceptor for the enzyme in this species is believed to be plastoquinone. Couples the redox reaction to proton translocation, and thus conserves the redox energy in a proton gradient. Cyanobacterial NDH-1 also plays a role in inorganic carbon-concentration. The polypeptide is NAD(P)H-quinone oxidoreductase subunit M (Parasynechococcus marenigrum (strain WH8102)).